A 217-amino-acid polypeptide reads, in one-letter code: UPF0502 protein Sfri_1696 (217 aa).

Belongs to the UPF0502 family.

This is UPF0502 protein Sfri_1696 from Shewanella frigidimarina (strain NCIMB 400).